The sequence spans 271 residues: Thioredoxin-related transmembrane protein 2 homolog (271 aa).

Residues 1 to 28 (MTWKKQMALLAKPYYWVNILLAISYLLA) form the signal peptide. The Extracellular segment spans residues 29–102 (KKTQFICTRL…AILWAYADFR (74 aa)). The helical transmembrane segment at 103–123 (YGLGFLLLCVLVGMVLPEPSY) threads the bilayer. A Thioredoxin domain is found at 112 to 262 (VLVGMVLPEP…YKEAIERLPI (151 aa)). The Cytoplasmic portion of the chain corresponds to 124 to 271 (RGPEHITYFR…IAPKEAKKVQ (148 aa)). The Di-lysine motif motif lies at 268-271 (KKVQ).

The protein resides in the membrane. This is Thioredoxin-related transmembrane protein 2 homolog from Drosophila melanogaster (Fruit fly).